The chain runs to 386 residues: MATTKSFLILFFMILATTSSTCAKLEEMVTVLSIDGGGIKGIIPAIILEFLEGQLQEVDNNKDARLADYFDVIGGTSTGGLLTAMITTPNENNRPFAAAKDIVPFYFEHGPHIFNYSGSIFGPRYDGKYLLQVLQEKLGETRVHQALTEVAISSFDIKTNKPVIFTKSNLAKSPELDAKMYDICYSIAAAPIYFPPHHFVTHTSNGATYEFNLVDGGVATVGDPALLSLSVATRLAQEDPAFSSIKSLDYKQMLLLSLGTGTNSEFDKTYTAEEAAKWGPLRWMLAIQQLTNAASSYMTDYYISTVFQARHSQNNYLRVQENALTGTTTEMDDASEANMELLVQVGETLLKKPVSKDSPETYEEALKRFAKLLSNRKKLRANKASY.

The first 23 residues, 1–23 (MATTKSFLILFFMILATTSSTCA), serve as a signal peptide directing secretion. Residues 32–229 (LSIDGGGIKG…TVGDPALLSL (198 aa)) form the PNPLA domain. Positions 36–41 (GGGIKG) match the GXGXXG motif. The GXSXG motif lies at 75–79 (GTSTG). The active-site Nucleophile is the serine 77. Asparagine 115 carries N-linked (GlcNAc...) asparagine glycosylation. Aspartate 215 acts as the Proton acceptor in catalysis. A DGA/G motif is present at residues 215–217 (DGG).

The protein belongs to the patatin family.

Its subcellular location is the vacuole. Probable lipolytic acyl hydrolase (LAH), an activity which is thought to be involved in the response of tubers to pathogens. The protein is Patatin-B1 (PATB1) of Solanum tuberosum (Potato).